The sequence spans 555 residues: CTP synthase (555 aa).

The tract at residues 1-267 (MTKFVFVTGG…AQQVLKFMHL (267 aa)) is amidoligase domain. Residue Ser-13 participates in CTP binding. Ser-13 serves as a coordination point for UTP. ATP-binding positions include 14-19 (SIGKGI) and Asp-71. Residues Asp-71 and Glu-141 each contribute to the Mg(2+) site. CTP is bound by residues 148–150 (DIE), 188–193 (KTKPTQ), and Lys-224. Residues 188-193 (KTKPTQ) and Lys-224 each bind UTP. Ala-242 contributes to the ATP binding site. The 237-residue stretch at 299–535 (YVQLSDAYLS…VGACLADNGN (237 aa)) folds into the Glutamine amidotransferase type-1 domain. Residue Gly-354 coordinates L-glutamine. The Nucleophile; for glutamine hydrolysis role is filled by Cys-381. Residues 382-385 (LGMQ), Glu-405, and Arg-463 each bind L-glutamine. Active-site residues include His-508 and Glu-510. The interval 536–555 (NANHHDSTPAEPLVSEPLSS) is disordered.

The protein belongs to the CTP synthase family. Homotetramer.

It catalyses the reaction UTP + L-glutamine + ATP + H2O = CTP + L-glutamate + ADP + phosphate + 2 H(+). The enzyme catalyses L-glutamine + H2O = L-glutamate + NH4(+). It carries out the reaction UTP + NH4(+) + ATP = CTP + ADP + phosphate + 2 H(+). It participates in pyrimidine metabolism; CTP biosynthesis via de novo pathway; CTP from UDP: step 2/2. Its activity is regulated as follows. Allosterically activated by GTP, when glutamine is the substrate; GTP has no effect on the reaction when ammonia is the substrate. The allosteric effector GTP functions by stabilizing the protein conformation that binds the tetrahedral intermediate(s) formed during glutamine hydrolysis. Inhibited by the product CTP, via allosteric rather than competitive inhibition. Catalyzes the ATP-dependent amination of UTP to CTP with either L-glutamine or ammonia as the source of nitrogen. Regulates intracellular CTP levels through interactions with the four ribonucleotide triphosphates. The polypeptide is CTP synthase (Acaryochloris marina (strain MBIC 11017)).